The sequence spans 681 residues: Sorting nexin-41 (681 aa).

Positions 1–12 are enriched in acidic residues; the sequence is MSTDNLFEDIEQ. The interval 1 to 94 is disordered; that stretch reads MSTDNLFEDI…HNTSLNNGYP (94 aa). The span at 13–24 shows a compositional bias: polar residues; sequence DNNPSFYGNPSI. The PX domain maps to 113-236; that stretch reads NDSQLQVDII…KFFDPNYELC (124 aa). Positions 151, 153, 177, and 200 each coordinate a 1,2-diacyl-sn-glycero-3-phospho-(1D-myo-inositol-3-phosphate). Disordered stretches follow at residues 475 to 505 and 558 to 597; these read LASR…TENF and TATG…QTSI. Low complexity-rich tracts occupy residues 482 to 497 and 558 to 589; these read DNDS…NNND and TATG…QSQS.

It belongs to the sorting nexin family.

Its subcellular location is the endosome membrane. The protein resides in the endomembrane system. Its function is as follows. May be required for cytoplasm to vacuole transport (Cvt) and pexophagy. This chain is Sorting nexin-41 (SNX41), found in Candida albicans (strain SC5314 / ATCC MYA-2876) (Yeast).